We begin with the raw amino-acid sequence, 891 residues long: Echinoderm microtubule-associated protein-like elp-1 (891 aa).

Polar residues predominate over residues 77–88 (DQSRSPTCSGYS). The disordered stretch occupies residues 77–167 (DQSRSPTCSG…ARGSPMRKWV (91 aa)). The span at 104 to 117 (SPSHAPPRSSHANS) shows a compositional bias: low complexity. Positions 118–131 (KSLYINGMNNNSEE) are enriched in polar residues. WD repeat units follow at residues 330–401 (GHTC…TLMV), 404–447 (GFEK…REGE), 499–537 (DKPK…TTKQ), 541–579 (VHPG…RTRR), 626–664 (GDPG…VEFS), 708–747 (EGTA…NLLV), 753–792 (HIPA…CDGT), 816–853 (SSNG…VTAG), and 859–890 (GHGR…EWCL).

Belongs to the WD repeat EMAP family.

It is found in the cytoplasm. It localises to the cytoskeleton. Its function is as follows. May modify the assembly dynamics of microtubules, such that microtubules are slightly longer, but more dynamic. The polypeptide is Echinoderm microtubule-associated protein-like elp-1 (elp-1) (Caenorhabditis elegans).